The following is a 632-amino-acid chain: tRNA-guanine(15) transglycosylase (632 aa).

Residue Asp86 is the Nucleophile of the active site. Asp121 and Gly186 together coordinate substrate. The PUA domain occupies 553–628; the sequence is NLRVFVKNES…IAVKIHEGRD (76 aa).

This sequence belongs to the archaeosine tRNA-ribosyltransferase family. It depends on Zn(2+) as a cofactor.

It carries out the reaction guanosine(15) in tRNA + 7-cyano-7-deazaguanine = 7-cyano-7-carbaguanosine(15) in tRNA + guanine. It participates in tRNA modification; archaeosine-tRNA biosynthesis. Its function is as follows. Exchanges the guanine residue with 7-cyano-7-deazaguanine (preQ0) at position 15 in the dihydrouridine loop (D-loop) of archaeal tRNAs. The chain is tRNA-guanine(15) transglycosylase from Thermoplasma volcanium (strain ATCC 51530 / DSM 4299 / JCM 9571 / NBRC 15438 / GSS1).